The chain runs to 143 residues: Large ribosomal subunit protein uL15 (143 aa).

A disordered region spans residues 1–52; sequence MELNTIQPADGAKHYKRRVGRGIGSGLGKTAGRGHKGQKSRSGGFHKVGFEG. Positions 21 to 31 are enriched in gly residues; it reads RGIGSGLGKTA.

Belongs to the universal ribosomal protein uL15 family. Part of the 50S ribosomal subunit.

Functionally, binds to the 23S rRNA. The polypeptide is Large ribosomal subunit protein uL15 (Herminiimonas arsenicoxydans).